Reading from the N-terminus, the 147-residue chain is Male-specific protein scotti (147 aa).

Residues 57-76 (EPPLGVFPAQGGPNGPPRLR) form a disordered region. An N-linked (GlcNAc...) asparagine glycan is attached at Asn-128.

Belongs to the male-specific scotti family.

Its function is as follows. Post-meiotically transcribed gene that has a role in late spermiogenesis; required for actin cone progression during spermatid individualization. In Drosophila simulans (Fruit fly), this protein is Male-specific protein scotti.